The sequence spans 204 residues: Protease (204 aa).

Catalysis depends on residues histidine 54, aspartate 71, and cysteine 121.

Belongs to the peptidase C5 family. In terms of assembly, interacts with protease cofactor pVI-C; this interaction is necessary for protease activation.

The protein localises to the virion. Its subcellular location is the host nucleus. It carries out the reaction Cleaves proteins of the adenovirus and its host cell at two consensus sites: -Yaa-Xaa-Gly-Gly-|-Xaa- and -Yaa-Xaa-Gly-Xaa-|-Gly- (in which Yaa is Met, Ile or Leu, and Xaa is any amino acid).. With respect to regulation, requires DNA and protease cofactor for maximal activation. Inside nascent virions, becomes partially activated by binding to the viral DNA, allowing it to cleave the cofactor that binds to the protease and fully activates it. Actin, like the viral protease cofactor, seems to act as a cofactor in the cleavage of cytokeratin 18 and of actin itself. Cleaves viral precursor proteins (pTP, pIIIa, pVI, pVII, pVIII, and pX) inside newly assembled particles giving rise to mature virions. Protease complexed to its cofactor slides along the viral DNA to specifically locate and cleave the viral precursors. Mature virions have a weakened organization compared to the unmature virions, thereby facilitating subsequent uncoating. Without maturation, the particle lacks infectivity and is unable to uncoat. Late in adenovirus infection, in the cytoplasm, may participate in the cytoskeleton destruction. Cleaves host cell cytoskeletal keratins K7 and K18. This is Protease from Frog adenovirus 1 (strain ATCC VR-896) (FrAdV-1).